The sequence spans 571 residues: Proline--tRNA ligase (571 aa).

The protein belongs to the class-II aminoacyl-tRNA synthetase family. ProS type 1 subfamily. In terms of assembly, homodimer.

The protein localises to the cytoplasm. The enzyme catalyses tRNA(Pro) + L-proline + ATP = L-prolyl-tRNA(Pro) + AMP + diphosphate. In terms of biological role, catalyzes the attachment of proline to tRNA(Pro) in a two-step reaction: proline is first activated by ATP to form Pro-AMP and then transferred to the acceptor end of tRNA(Pro). As ProRS can inadvertently accommodate and process non-cognate amino acids such as alanine and cysteine, to avoid such errors it has two additional distinct editing activities against alanine. One activity is designated as 'pretransfer' editing and involves the tRNA(Pro)-independent hydrolysis of activated Ala-AMP. The other activity is designated 'posttransfer' editing and involves deacylation of mischarged Ala-tRNA(Pro). The misacylated Cys-tRNA(Pro) is not edited by ProRS. This chain is Proline--tRNA ligase, found in Pseudomonas paraeruginosa (strain DSM 24068 / PA7) (Pseudomonas aeruginosa (strain PA7)).